A 303-amino-acid chain; its full sequence is ATP synthase gamma chain (303 aa).

The protein belongs to the ATPase gamma chain family. As to quaternary structure, F-type ATPases have 2 components, CF(1) - the catalytic core - and CF(0) - the membrane proton channel. CF(1) has five subunits: alpha(3), beta(3), gamma(1), delta(1), epsilon(1). CF(0) has three main subunits: a, b and c.

Its subcellular location is the cell inner membrane. Its function is as follows. Produces ATP from ADP in the presence of a proton gradient across the membrane. The gamma chain is believed to be important in regulating ATPase activity and the flow of protons through the CF(0) complex. This is ATP synthase gamma chain from Bartonella quintana (strain Toulouse) (Rochalimaea quintana).